Reading from the N-terminus, the 352-residue chain is MASREDELRNCVVCGDQATGYHFNALTCEGCKGFFRRTVSKSIGPTCPFAGSCEVSKIQRRHCPACRLQKCLDAGMRKDMILSAEALALRRAKQAQRRAQQTPMQLSNEQEELIQTLLGAHTRHMGTMFEQFVQFRPPAHLFIHHQPLPTLAPVLPLVTHFADVNTFMVQQVIKFTKDLPVFRSLPIEDQISLLKGAAVEICHIVLNTTFCLQTQNFLCGPLRYTIEDAARVSPAVGFQVEFLELLFHFHGTLRKLQLQEPEYVLLAAMALFSPDRPGVTQRHEIDQLQEEMALTLQSYIKGQQQRPRDRFLYAKLLGLLAELRSINEAYGYQIQHIQGLSAMMPLLQEICS.

Positions 8–83 form a DNA-binding region, nuclear receptor; that stretch reads LRNCVVCGDQ…AGMRKDMILS (76 aa). An NR C4-type zinc finger spans residues 11 to 31; the sequence is CVVCGDQATGYHFNALTCEGC. Thr38 carries the phosphothreonine; by PKC modification. The NR C4-type zinc-finger motif lies at 47–71; the sequence is CPFAGSCEVSKIQRRHCPACRLQKC. The NR LBD domain maps to 109–352; that stretch reads EQEELIQTLL…MMPLLQEICS (244 aa).

This sequence belongs to the nuclear hormone receptor family. NR1 subfamily. Heterodimer of NR1I3 and RXR. Interacts with PSMC4. Interacts with ECT2. Directly interacts with DNAJC7; this complex may also include HSP90. Interacts with CRY1. Interacts with CRY2 in a ligand-dependent manner. Phosphorylated at Thr-38 by PKC, dephosphorylation of Thr-38 is required for nuclear translocation and activation.

The protein localises to the nucleus. It localises to the cytoplasm. Its subcellular location is the cytoskeleton. In terms of biological role, binds and transactivates the retinoic acid response elements that control expression of the retinoic acid receptor beta 2 and alcohol dehydrogenase 3 genes. Transactivates both the phenobarbital responsive element module of the human CYP2B6 gene and the CYP3A4 xenobiotic response element. In Macaca mulatta (Rhesus macaque), this protein is Nuclear receptor subfamily 1 group I member 3 (NR1I3).